The primary structure comprises 555 residues: Transcription factor kojR (555 aa).

A DNA-binding region (zn(2)-C6 fungal-type) is located at residues 21 to 47 (CETCKLRKRKCDGHEPCTYCLRYEYQC). Positions 51–73 (PHPRRKPAASKSSARPSEEEDSP) are disordered.

The protein resides in the nucleus. Functionally, transcription factor that regulates the gene cluster that mediates the biosynthesis of 5-hydroxy-2-hydroxymethyl-1,4-pyrone, also know as kojic acid, a by-product in the fermentation process of malting rice that acts as a chelation agent. Mediates the expression of kojA and kojT via binding of an 11-nucleotide palindromic sequence, 5'-CGRCTWAGYCG-3' (R=A/G, W=A/T, Y=C/T) within the target gene promoters. This Aspergillus flavus (strain ATCC 200026 / FGSC A1120 / IAM 13836 / NRRL 3357 / JCM 12722 / SRRC 167) protein is Transcription factor kojR.